We begin with the raw amino-acid sequence, 452 residues long: Pup--protein ligase (452 aa).

Glu-9 lines the Mg(2+) pocket. Arg-53 is an ATP binding site. Tyr-55 lines the Mg(2+) pocket. The active-site Proton acceptor is Asp-57. Residue Glu-63 coordinates Mg(2+). Residues Thr-66 and Trp-419 each coordinate ATP.

This sequence belongs to the Pup ligase/Pup deamidase family. Pup-conjugating enzyme subfamily.

The catalysed reaction is ATP + [prokaryotic ubiquitin-like protein]-L-glutamate + [protein]-L-lysine = ADP + phosphate + N(6)-([prokaryotic ubiquitin-like protein]-gamma-L-glutamyl)-[protein]-L-lysine.. It functions in the pathway protein degradation; proteasomal Pup-dependent pathway. Its pathway is protein modification; protein pupylation. Functionally, catalyzes the covalent attachment of the prokaryotic ubiquitin-like protein modifier Pup to the proteasomal substrate proteins, thereby targeting them for proteasomal degradation. This tagging system is termed pupylation. The ligation reaction involves the side-chain carboxylate of the C-terminal glutamate of Pup and the side-chain amino group of a substrate lysine. This Geodermatophilus obscurus (strain ATCC 25078 / DSM 43160 / JCM 3152 / CCUG 61914 / KCC A-0152 / KCTC 9177 / NBRC 13315 / NRRL B-3577 / G-20) protein is Pup--protein ligase.